Consider the following 114-residue polypeptide: Nucleoid-associated protein PCC8801_2554 (114 aa).

Belongs to the YbaB/EbfC family. In terms of assembly, homodimer.

The protein resides in the cytoplasm. The protein localises to the nucleoid. Binds to DNA and alters its conformation. May be involved in regulation of gene expression, nucleoid organization and DNA protection. This Rippkaea orientalis (strain PCC 8801 / RF-1) (Cyanothece sp. (strain PCC 8801)) protein is Nucleoid-associated protein PCC8801_2554.